The sequence spans 559 residues: DNA ligase (559 aa).

An ATP-binding site is contributed by Glu247. Catalysis depends on Lys249, which acts as the N6-AMP-lysine intermediate. Arg254, Arg269, Glu299, Phe339, Arg414, and Lys420 together coordinate ATP.

This sequence belongs to the ATP-dependent DNA ligase family. It depends on Mg(2+) as a cofactor.

It catalyses the reaction ATP + (deoxyribonucleotide)n-3'-hydroxyl + 5'-phospho-(deoxyribonucleotide)m = (deoxyribonucleotide)n+m + AMP + diphosphate.. The enzyme catalyses NAD(+) + (deoxyribonucleotide)n-3'-hydroxyl + 5'-phospho-(deoxyribonucleotide)m = (deoxyribonucleotide)n+m + AMP + beta-nicotinamide D-nucleotide.. DNA ligase that seals nicks in double-stranded DNA during DNA replication, DNA recombination and DNA repair. Shows high activity with either ATP or NAD(+). The sequence is that of DNA ligase from Thermococcus fumicolans.